The following is a 362-amino-acid chain: tRNA/tmRNA (uracil-C(5))-methyltransferase (362 aa).

S-adenosyl-L-methionine is bound by residues Gln182, Tyr210, Asn215, Glu231, and Asp293. Cys318 serves as the catalytic Nucleophile. Catalysis depends on Glu352, which acts as the Proton acceptor.

The protein belongs to the class I-like SAM-binding methyltransferase superfamily. RNA M5U methyltransferase family. TrmA subfamily.

The enzyme catalyses uridine(54) in tRNA + S-adenosyl-L-methionine = 5-methyluridine(54) in tRNA + S-adenosyl-L-homocysteine + H(+). It catalyses the reaction uridine(341) in tmRNA + S-adenosyl-L-methionine = 5-methyluridine(341) in tmRNA + S-adenosyl-L-homocysteine + H(+). Its function is as follows. Dual-specificity methyltransferase that catalyzes the formation of 5-methyluridine at position 54 (m5U54) in all tRNAs, and that of position 341 (m5U341) in tmRNA (transfer-mRNA). This Neisseria meningitidis serogroup B (strain ATCC BAA-335 / MC58) protein is tRNA/tmRNA (uracil-C(5))-methyltransferase.